The following is a 368-amino-acid chain: Galactoside 2-alpha-L-fucosyltransferase SEC1 (368 aa).

Positions 1-20 are disordered; sequence MWDMRAVAPQRPAAGHPRAG. Residues 1-31 lie on the Cytoplasmic side of the membrane; the sequence is MWDMRAVAPQRPAAGHPRAGWPRKLKTAATR. Residues 32–52 traverse the membrane as a helical segment; it reads FWATCPSSSTVCFLFVIFAVS. Topologically, residues 53 to 368 are lumenal; sequence TVFHCHRRLA…NLGQARESHP (316 aa).

The protein belongs to the glycosyltransferase 11 family. In terms of tissue distribution, kidney.

Its subcellular location is the golgi apparatus. It localises to the golgi stack membrane. It carries out the reaction a ganglioside GM1 + GDP-beta-L-fucose = a ganglioside Fuc-GM1 + GDP + H(+). Its pathway is protein modification; protein glycosylation. In terms of biological role, catalyzes the transfer of alpha 1,2-linked fucose to ganglioside GM1 and galacto-N-biose. The chain is Galactoside 2-alpha-L-fucosyltransferase SEC1 from Bos taurus (Bovine).